We begin with the raw amino-acid sequence, 523 residues long: MQLPRELKYAAIAGGVALFGLIFGWVLFPTILKSQLKKEMALSKKTDVRKMWEKIPFALDFKVYIFNFTNAEEVQKGATPILKEIGPYHFDEWKEKVEVEDHEEDDTITYKKRDVFYFNPEMSAPGLTGEEIVVIPHIFMLGMALTVARDKPAMLNMVGKAMNGIFDDPPDIFLRVKALDILFRGMIINCARTEFAPKATCTALKKEGVSGLVLEPNNQFRFSIFGTRNNTIDPHVITVKRGITSVMDVGQVVAVDGKTEQTIWRDTCNEFQGTDGTVFPPFVPETERIESFSTDLCRTFKPWYQKKTSYRGIKTNRYIANIGDFANDPELNCYCAKPDTCPPKGLMDLAPCMKAPMYASMPHFLDSDPALLSKVKGLNPDVTQHGIEIDYEPITGTPMVAKQRIQFNIQLLKTDKLDLFKDLSGDIVPLFWIDEGLALNKTFVNMLKHQLFIPKRVVGVLRWWMVSFGSLGAVIGIVFHFRDHIMRLAVSGDTKVSKVTPEEEEQKDISVIGQAQEPAKVNI.

The Cytoplasmic portion of the chain corresponds to 1 to 11 (MQLPRELKYAA). A helical membrane pass occupies residues 12 to 32 (IAGGVALFGLIFGWVLFPTIL). The Extracellular portion of the chain corresponds to 33–458 (KSQLKKEMAL…HQLFIPKRVV (426 aa)). N-linked (GlcNAc...) asparagine glycans are attached at residues N67 and N229. 3 disulfide bridges follow: C268-C333, C297-C352, and C335-C341. The N-linked (GlcNAc...) asparagine glycan is linked to N440. The helical transmembrane segment at 459–479 (GVLRWWMVSFGSLGAVIGIVF) threads the bilayer. Topologically, residues 480 to 523 (HFRDHIMRLAVSGDTKVSKVTPEEEEQKDISVIGQAQEPAKVNI) are cytoplasmic.

Belongs to the CD36 family.

It localises to the cell membrane. Its function is as follows. Plays an olfactory role that is not restricted to pheromone sensitivity. The sequence is that of Sensory neuron membrane protein 1 from Helicoverpa armigera (Cotton bollworm).